Here is a 212-residue protein sequence, read N- to C-terminus: ATP-dependent dethiobiotin synthetase BioD (212 aa).

13-18 (GIGKTV) serves as a coordination point for ATP. T17 contributes to the Mg(2+) binding site. K33 is a catalytic residue. A substrate-binding site is contributed by S37. E100 provides a ligand contact to Mg(2+). Residues 100 to 103 (EGAG) and 184 to 186 (PRL) each bind ATP.

This sequence belongs to the dethiobiotin synthetase family. Homodimer. Mg(2+) is required as a cofactor.

The protein localises to the cytoplasm. The enzyme catalyses (7R,8S)-7,8-diammoniononanoate + CO2 + ATP = (4R,5S)-dethiobiotin + ADP + phosphate + 3 H(+). It participates in cofactor biosynthesis; biotin biosynthesis; biotin from 7,8-diaminononanoate: step 1/2. Its function is as follows. Catalyzes a mechanistically unusual reaction, the ATP-dependent insertion of CO2 between the N7 and N8 nitrogen atoms of 7,8-diaminopelargonic acid (DAPA, also called 7,8-diammoniononanoate) to form a ureido ring. This Rhodopseudomonas palustris (strain TIE-1) protein is ATP-dependent dethiobiotin synthetase BioD.